The primary structure comprises 128 residues: uncharacterized protein (128 aa).

This is an uncharacterized protein from Saccharomyces cerevisiae (strain ATCC 204508 / S288c) (Baker's yeast).